The chain runs to 119 residues: Beta-2-microglobulin (119 aa).

An N-terminal signal peptide occupies residues 1–20 (MARFVAVALLVLLSLSGLEA). In terms of domain architecture, Ig-like C1-type spans 25–114 (PKIQVYSRHP…VTFSTPKTVK (90 aa)). Cys-45 and Cys-100 are joined by a disulfide.

The protein belongs to the beta-2-microglobulin family. As to quaternary structure, heterodimer of an alpha chain and a beta chain. Beta-2-microglobulin is the beta-chain of major histocompatibility complex class I molecules.

The protein localises to the secreted. Functionally, component of the class I major histocompatibility complex (MHC). Involved in the presentation of peptide antigens to the immune system. The protein is Beta-2-microglobulin (B2M) of Plecturocebus moloch (Dusky titi monkey).